Here is a 196-residue protein sequence, read N- to C-terminus: Carnitine operon protein CaiE (196 aa).

A disordered region spans residues 176–196 (LRQMEENRPRLQGTTDVAPKR).

This sequence belongs to the transferase hexapeptide repeat family.

It participates in amine and polyamine metabolism; carnitine metabolism. Functionally, overproduction of CaiE stimulates the activity of CaiB and CaiD. This chain is Carnitine operon protein CaiE, found in Escherichia fergusonii (strain ATCC 35469 / DSM 13698 / CCUG 18766 / IAM 14443 / JCM 21226 / LMG 7866 / NBRC 102419 / NCTC 12128 / CDC 0568-73).